The primary structure comprises 533 residues: Zinc finger protein 26 (533 aa).

Residues 14–85 (LSFKDISMEF…NAKISRQSCP (72 aa)) enclose the KRAB domain. 13 C2H2-type zinc fingers span residues 174-196 (CVCS…LRIH), 202-224 (YECS…QRVH), 230-252 (YSCS…QEIH), 258-280 (YGCS…QRSH), 286-308 (YECS…QRTH), 314-336 (HKCS…IRMH), 342-364 (YQCS…QGVH), 370-392 (YQCG…LRAH), 398-420 (YGCS…RRTH), 426-448 (YECS…QRTH), 454-476 (YECN…QKTH), 482-504 (FKCS…QRVH), and 510-532 (WKCS…RKTH).

Belongs to the krueppel C2H2-type zinc-finger protein family.

The protein localises to the nucleus. In terms of biological role, may be involved in transcriptional regulation. The sequence is that of Zinc finger protein 26 (ZNF26) from Homo sapiens (Human).